The following is a 245-amino-acid chain: NAD-dependent protein deacylase (245 aa).

The Deacetylase sirtuin-type domain occupies 1–237 (MNFPYRNIVV…PKLVEELLAH (237 aa)). 13–32 (GAGISAESGIQTFRAQDGLW) lines the NAD(+) pocket. Substrate contacts are provided by Tyr-57 and Arg-60. 94-97 (QNID) serves as a coordination point for NAD(+). The active-site Proton acceptor is His-112. Residues Cys-120 and Cys-139 each contribute to the Zn(2+) site. NAD(+) is bound by residues 179–181 (GTS), 205–207 (NLE), and Ala-223.

The protein belongs to the sirtuin family. Class III subfamily. The cofactor is Zn(2+).

The protein localises to the cytoplasm. The catalysed reaction is N(6)-acetyl-L-lysyl-[protein] + NAD(+) + H2O = 2''-O-acetyl-ADP-D-ribose + nicotinamide + L-lysyl-[protein]. It catalyses the reaction N(6)-succinyl-L-lysyl-[protein] + NAD(+) + H2O = 2''-O-succinyl-ADP-D-ribose + nicotinamide + L-lysyl-[protein]. Functionally, NAD-dependent lysine deacetylase and desuccinylase that specifically removes acetyl and succinyl groups on target proteins. Modulates the activities of several proteins which are inactive in their acylated form. The sequence is that of NAD-dependent protein deacylase from Vibrio vulnificus (strain YJ016).